The primary structure comprises 371 residues: MTAPARRLCHIAFHVPAGQPLARDLHRVFGFQPLAVREAGGWRQLALRSGDAVFLVNEGTGPQEPLYSLDPHHSVPSATNLCFDVEDVDGAARALAARGCIMPVPPTRVRDAQGTATYTVLSSPAGNLSLTLLQRAGYRGSFLPGFRPLPCTPGPGWVSHVDHLTLACTSGSSPMLMRWFHDCLGFHHLPLSPGEDPEMGLKVAAGSGRGGLRLTALQTPPNNTVPTLVLAESLPGLNSKQDQVEQFLTRHGGPGLQHVGLYTPNIIDASEGMAKAGCRLLTPPEAYYQQPGKEEQILAAGHKPGLLERQGILLDGDKDEFLLQVFTKSLFAEDTFFLELIQRQGATGFGQNNIRALWQSVQEEAARAQGA.

VOC domains follow at residues 7–135 (RLCH…LLQR) and 160–328 (HVDH…VFTK). Residues histidine 163, histidine 258, and glutamate 339 each contribute to the Fe cation site.

The protein belongs to the 4HPPD family. Fe cation serves as cofactor.

Its subcellular location is the mitochondrion. It catalyses the reaction 3-(4-hydroxyphenyl)pyruvate + O2 = (S)-4-hydroxymandelate + CO2. Iron-dependent dioxygenase that catalyzes the conversion of 4-hydroxyphenylpyruvate (4-HPPA) to 4-hydroxymandelate (4-HMA) in the mitochondria, one of the steps in the biosynthesis of coenzyme Q10 from tyrosine. This is 4-hydroxyphenylpyruvate dioxygenase-like protein from Mus musculus (Mouse).